The sequence spans 231 residues: 26S proteasome non-ATPase regulatory subunit 10 (231 aa).

ANK repeat units lie at residues 3-36, 37-69, 70-102, 103-135, 136-168, 169-201, and 202-226; these read GCVSNLMVCNLAYNGKLDELKESILADKSLATRT, DQDSRTALHWACSAGHTEIVEFLLQLGVPVNEK, DDAGWSPLHIAASAGRDEIVKALLIKGAQVNAV, NQNGCTALHYAASKNRHEIAVMLLEGGANPDAK, NHYDATAMHRAAAKGNLKMVHILLFYKASTNIQ, DTEGNTPLHLACDEERVEEAKLLVTQGASIYIE, and NKEEKTPLQVAKGGLGLILKRIAES.

As to quaternary structure, part of transient complex containing PSMD10, PSMC4, PSMC5 and PAAF1 formed during the assembly of the 26S proteasome. Stays associated throughout the assembly of the PA700/19S RC and is released upon association with the 20S core. Interacts with PSMC4. Interacts with RB1. Interacts with CDK4. Interacts with MDM2. Interacts with RELA. Associates with a CDK4:CCND2 serine/threonine kinase complex. Interacts with ARHGDIA and increases the interaction between ARHGDIA and RHOA, hence promotes ARHGDIA inactivation of RHOA and ROCK.

It localises to the cytoplasm. The protein localises to the nucleus. Functionally, acts as a chaperone during the assembly of the 26S proteasome, specifically of the PA700/19S regulatory complex (RC). In the initial step of the base subcomplex assembly is part of an intermediate PSMD10:PSMC4:PSMC5:PAAF1 module which probably assembles with a PSMD5:PSMC2:PSMC1:PSMD2 module. Independently of the proteasome, regulates EGF-induced AKT activation through inhibition of the RHOA/ROCK/PTEN pathway, leading to prolonged AKT activation. Plays an important role in RAS-induced tumorigenesis. Acts as an oncoprotein by being involved in negative regulation of tumor suppressors RB1 and p53/TP53. Overexpression is leading to phosphorylation of RB1 and proteasomal degradation of RB1. Regulates CDK4-mediated phosphorylation of RB1 by competing with CDKN2A for binding with CDK4. Facilitates binding of MDM2 to p53/TP53 and the mono- and polyubiquitination of p53/TP53 by MDM2 suggesting a function in targeting the TP53:MDM2 complex to the 26S proteasome. Involved in p53-independent apoptosis. Involved in regulation of NF-kappa-B by retaining it in the cytoplasm. Binds to the NF-kappa-B component RELA and accelerates its XPO1/CRM1-mediated nuclear export. The protein is 26S proteasome non-ATPase regulatory subunit 10 (Psmd10) of Rattus norvegicus (Rat).